We begin with the raw amino-acid sequence, 72 residues long: Translation initiation factor IF-1 (72 aa).

The S1-like domain occupies 1–72 (MAKEEAITVD…SKGRITYRKK (72 aa)).

Belongs to the IF-1 family. Component of the 30S ribosomal translation pre-initiation complex which assembles on the 30S ribosome in the order IF-2 and IF-3, IF-1 and N-formylmethionyl-tRNA(fMet); mRNA recruitment can occur at any time during PIC assembly.

Its subcellular location is the cytoplasm. Its function is as follows. One of the essential components for the initiation of protein synthesis. Stabilizes the binding of IF-2 and IF-3 on the 30S subunit to which N-formylmethionyl-tRNA(fMet) subsequently binds. Helps modulate mRNA selection, yielding the 30S pre-initiation complex (PIC). Upon addition of the 50S ribosomal subunit IF-1, IF-2 and IF-3 are released leaving the mature 70S translation initiation complex. The sequence is that of Translation initiation factor IF-1 from Leptospira borgpetersenii serovar Hardjo-bovis (strain L550).